The primary structure comprises 717 residues: Delta-1-pyrroline-5-carboxylate synthase (717 aa).

Residues 1–296 (METVDSTRAF…WASIGETDAR (296 aa)) form a glutamate 5-kinase region. Positions 60, 157, and 176 each coordinate substrate. Residues 196–197 (SD) and 236–242 (RGGMTAK) contribute to the ATP site. Positions 297–717 (EMAVAARACS…YSHKDLTQQG (421 aa)) are gamma-glutamyl phosphate reductase.

It in the N-terminal section; belongs to the glutamate 5-kinase family. In the C-terminal section; belongs to the gamma-glutamyl phosphate reductase family. In terms of tissue distribution, expressed at high levels in leaves and is inducible in roots subjected to salt stress.

The enzyme catalyses L-glutamate + ATP = L-glutamyl 5-phosphate + ADP. It carries out the reaction L-glutamate 5-semialdehyde + phosphate + NADP(+) = L-glutamyl 5-phosphate + NADPH + H(+). The protein operates within amino-acid biosynthesis; L-proline biosynthesis; L-glutamate 5-semialdehyde from L-glutamate: step 1/2. It functions in the pathway amino-acid biosynthesis; L-proline biosynthesis; L-glutamate 5-semialdehyde from L-glutamate: step 2/2. With respect to regulation, feedback regulated by proline. P5CS plays a key role in proline biosynthesis, leading to osmoregulation in plants. The polypeptide is Delta-1-pyrroline-5-carboxylate synthase (PRO2) (Solanum lycopersicum (Tomato)).